A 449-amino-acid chain; its full sequence is Asparagine--tRNA ligase (449 aa).

It belongs to the class-II aminoacyl-tRNA synthetase family. In terms of assembly, homodimer.

The protein resides in the cytoplasm. The enzyme catalyses tRNA(Asn) + L-asparagine + ATP = L-asparaginyl-tRNA(Asn) + AMP + diphosphate + H(+). In Desulfotalea psychrophila (strain LSv54 / DSM 12343), this protein is Asparagine--tRNA ligase.